Reading from the N-terminus, the 251-residue chain is Gamma-interferon-inducible lysosomal thiol reductase (251 aa).

Positions 1–21 are cleaved as a signal peptide; the sequence is MFGFRLSVLLFAVCSLSACSC. Positions 22-60 constitute a Saposin A-type domain; the sequence is MFVNSCKYPPSQWCDSRDIAAQCGVLEQCMKFNASPVTV. Cysteines 68 and 71 form a disulfide. Asn-108 carries an N-linked (GlcNAc...) asparagine glycan.

The protein belongs to the GILT family. As to quaternary structure, dimer; disulfide-linked. Highly expressed in spleen and kidney. Also detected at lower levels in liver, heart, brain, intestine and gill.

Its subcellular location is the secreted. The protein localises to the lysosome. Functionally, lysosomal thiol reductase that can reduce protein disulfide bonds. May facilitate the complete unfolding of proteins destined for lysosomal degradation. Plays an important role in antigen processing. In Carassius auratus (Goldfish), this protein is Gamma-interferon-inducible lysosomal thiol reductase.